A 159-amino-acid polypeptide reads, in one-letter code: Cyclic pyranopterin monophosphate synthase (159 aa).

Residues 75-77 (LCH) and 113-114 (ME) each bind substrate. Asp-128 is a catalytic residue.

It belongs to the MoaC family. Homohexamer; trimer of dimers.

The catalysed reaction is (8S)-3',8-cyclo-7,8-dihydroguanosine 5'-triphosphate = cyclic pyranopterin phosphate + diphosphate. It participates in cofactor biosynthesis; molybdopterin biosynthesis. Catalyzes the conversion of (8S)-3',8-cyclo-7,8-dihydroguanosine 5'-triphosphate to cyclic pyranopterin monophosphate (cPMP). The polypeptide is Cyclic pyranopterin monophosphate synthase (Yersinia pseudotuberculosis serotype IB (strain PB1/+)).